Reading from the N-terminus, the 287-residue chain is Pyridoxal kinase PdxY (287 aa).

Substrate-binding positions include S10 and 45 to 46 (TQ). ATP is bound by residues D112, A144, E149, K182, and 209-212 (RPLV). D224 provides a ligand contact to substrate.

Belongs to the pyridoxine kinase family. PdxY subfamily. As to quaternary structure, homodimer. Mg(2+) serves as cofactor.

The catalysed reaction is pyridoxal + ATP = pyridoxal 5'-phosphate + ADP + H(+). It functions in the pathway cofactor metabolism; pyridoxal 5'-phosphate salvage; pyridoxal 5'-phosphate from pyridoxal: step 1/1. Functionally, pyridoxal kinase involved in the salvage pathway of pyridoxal 5'-phosphate (PLP). Catalyzes the phosphorylation of pyridoxal to PLP. The sequence is that of Pyridoxal kinase PdxY from Escherichia coli O6:H1 (strain CFT073 / ATCC 700928 / UPEC).